A 389-amino-acid chain; its full sequence is Teichoic acid ribitol-phosphate primase (389 aa).

This sequence belongs to the CDP-glycerol glycerophosphotransferase family.

The protein resides in the cell membrane. The enzyme catalyses 4-O-[(2R)-glycerylphospho]-N-acetyl-beta-D-mannosaminyl-(1-&gt;4)-N-acetyl-alpha-D-glucosaminyl di-trans,octa-cis-undecaprenyl diphosphate + CDP-L-ribitol = 4-O-[1-D-ribitylphospho-(2R)-1-glycerylphospho]-N-acetyl-beta-D-mannosaminyl-(1-&gt;4)-N-acetyl-alpha-D-glucosaminyl di-trans,octa-cis-undecaprenyl diphosphate + CMP + H(+). Its pathway is cell wall biogenesis; poly(ribitol phosphate) teichoic acid biosynthesis. Catalyzes the addition of a single ribitol phosphate unit onto the glycerol phosphate of the linkage unit, as a primer for polymerisation by TarL. The polypeptide is Teichoic acid ribitol-phosphate primase (tarK) (Bacillus spizizenii (strain ATCC 23059 / NRRL B-14472 / W23) (Bacillus subtilis subsp. spizizenii)).